The following is a 424-amino-acid chain: MARKIQAIRGMNDILPDQSSVWLYLEKTVADVVKSYGYQQIRFPIVENTDLFKRGVGETTDIVEKEMYTFDDRNGESLTLRPEGTASCVRAADQAGLLFNQTQRLWYTGPMFRYERPQKGRYRQFHQIGVESFGMATADIDAELIILSARLWQKLGLLEHVELQLNTIGLASEREAYKAALVEYLTEFKDQLDEDSQRRLSTNPLRILDSKDESTQAILKNAPNLEDFIGEESQAHFDLLQAILKANGIPYVINRRLVRGLDYYGKTVFEWVTTHLGSQATVCAGGRYDGLVEQLGGKSTPAVGFAMGIERLVLLLETLNLIPDAAKFSTDVFVISMGDDAELASFVLAERLREENSNLVVLRHCGGGNFKNQMKKADRSEARFTIVLGQDEIDKGICQLKDMSTGEQQPHSIDDVATYINAKL.

The protein belongs to the class-II aminoacyl-tRNA synthetase family. As to quaternary structure, homodimer.

It localises to the cytoplasm. It carries out the reaction tRNA(His) + L-histidine + ATP = L-histidyl-tRNA(His) + AMP + diphosphate + H(+). This chain is Histidine--tRNA ligase, found in Marinomonas sp. (strain MWYL1).